Consider the following 214-residue polypeptide: Probable nicotinate-nucleotide adenylyltransferase (214 aa).

The protein belongs to the NadD family.

The catalysed reaction is nicotinate beta-D-ribonucleotide + ATP + H(+) = deamido-NAD(+) + diphosphate. It functions in the pathway cofactor biosynthesis; NAD(+) biosynthesis; deamido-NAD(+) from nicotinate D-ribonucleotide: step 1/1. Functionally, catalyzes the reversible adenylation of nicotinate mononucleotide (NaMN) to nicotinic acid adenine dinucleotide (NaAD). In Pseudomonas fluorescens (strain ATCC BAA-477 / NRRL B-23932 / Pf-5), this protein is Probable nicotinate-nucleotide adenylyltransferase.